Consider the following 329-residue polypeptide: Cytosolic arginine sensor for mTORC1 subunit 2 (329 aa).

ACT domains are found at residues 72 to 139 and 262 to 322; these read ADAT…MHTL and ELWK…NALQ.

It belongs to the GATS family. As to quaternary structure, may form homodimers and heterodimers.

It localises to the cytoplasm. The protein localises to the cytosol. Its function is as follows. Functions as a negative regulator of the TORC1 signaling pathway. The sequence is that of Cytosolic arginine sensor for mTORC1 subunit 2 from Xenopus laevis (African clawed frog).